The chain runs to 490 residues: Sulfate adenylyltransferase (490 aa).

An N-terminal region spans residues 1–165 (MTKALLKDLN…LQAVTPIRHF (165 aa)). Residues 166-390 (DFVEYRYSPA…LRQSYPPKYS (225 aa)) form a catalytic region. Gln193 contributes to the sulfate binding site. ATP-binding positions include 193–196 (QTRN) and 287–290 (GRDH). Active-site residues include Thr194, Arg195, and Asn196. Arg195 contributes to the sulfate binding site. Residue Ala291 participates in sulfate binding. Met329 lines the ATP pocket. The residue at position 356 (Thr356) is a Phosphothreonine. Residues 391 to 490 (QGFVLAVPAT…LSQLSDEGYL (100 aa)) are required for oligomerization; adenylyl-sulfate kinase-like.

This sequence belongs to the sulfate adenylyltransferase family. In terms of assembly, homohexamer. Dimer of trimers.

The protein localises to the cytoplasm. It catalyses the reaction sulfate + ATP + H(+) = adenosine 5'-phosphosulfate + diphosphate. Its pathway is sulfur metabolism; hydrogen sulfide biosynthesis; sulfite from sulfate: step 1/3. Its function is as follows. Catalyzes the first intracellular reaction of sulfate assimilation, forming adenosine-5'-phosphosulfate (APS) from inorganic sulfate and ATP. Plays an important role in sulfate activation as a component of the biosynthesis pathway of sulfur-containing amino acids. This is Sulfate adenylyltransferase (sua1) from Schizosaccharomyces pombe (strain 972 / ATCC 24843) (Fission yeast).